The chain runs to 234 residues: Phosphoribosylaminoimidazole-succinocarboxamide synthase (234 aa).

The protein belongs to the SAICAR synthetase family.

It carries out the reaction 5-amino-1-(5-phospho-D-ribosyl)imidazole-4-carboxylate + L-aspartate + ATP = (2S)-2-[5-amino-1-(5-phospho-beta-D-ribosyl)imidazole-4-carboxamido]succinate + ADP + phosphate + 2 H(+). It functions in the pathway purine metabolism; IMP biosynthesis via de novo pathway; 5-amino-1-(5-phospho-D-ribosyl)imidazole-4-carboxamide from 5-amino-1-(5-phospho-D-ribosyl)imidazole-4-carboxylate: step 1/2. The protein is Phosphoribosylaminoimidazole-succinocarboxamide synthase of Streptococcus agalactiae serotype V (strain ATCC BAA-611 / 2603 V/R).